The following is a 179-amino-acid chain: Large ribosomal subunit protein uL6 (179 aa).

This sequence belongs to the universal ribosomal protein uL6 family. Part of the 50S ribosomal subunit.

This protein binds to the 23S rRNA, and is important in its secondary structure. It is located near the subunit interface in the base of the L7/L12 stalk, and near the tRNA binding site of the peptidyltransferase center. The chain is Large ribosomal subunit protein uL6 from Bacillus velezensis (strain DSM 23117 / BGSC 10A6 / LMG 26770 / FZB42) (Bacillus amyloliquefaciens subsp. plantarum).